Here is a 436-residue protein sequence, read N- to C-terminus: Methylenetetrahydrofolate--tRNA-(uracil-5-)-methyltransferase TrmFO (436 aa).

10 to 15 contacts FAD; that stretch reads GAGLAG.

Belongs to the MnmG family. TrmFO subfamily. FAD is required as a cofactor.

The protein resides in the cytoplasm. It carries out the reaction uridine(54) in tRNA + (6R)-5,10-methylene-5,6,7,8-tetrahydrofolate + NADH + H(+) = 5-methyluridine(54) in tRNA + (6S)-5,6,7,8-tetrahydrofolate + NAD(+). The catalysed reaction is uridine(54) in tRNA + (6R)-5,10-methylene-5,6,7,8-tetrahydrofolate + NADPH + H(+) = 5-methyluridine(54) in tRNA + (6S)-5,6,7,8-tetrahydrofolate + NADP(+). Catalyzes the folate-dependent formation of 5-methyl-uridine at position 54 (M-5-U54) in all tRNAs. In Exiguobacterium sp. (strain ATCC BAA-1283 / AT1b), this protein is Methylenetetrahydrofolate--tRNA-(uracil-5-)-methyltransferase TrmFO.